Here is a 194-residue protein sequence, read N- to C-terminus: MAIGSKIIKPGGSDPDDFEKSIAQALVELEANSDLKPYLRDLHITRAREIEFGSKKAVIIYVPIPQQKVFQKIQIILVRELEKKFSGKHVVVIGERKILPKPTRKARNPLKQKRPRSRTLTAVYDAILEDLVFPAEIVGKRIRVKLDGSQLVKVHLDKNQQTTIEHKVDTFTSVYKKLTGRDVTFEFPDNYLNV.

Belongs to the eukaryotic ribosomal protein eS7 family.

The protein is Small ribosomal subunit protein eS7 (RpS7) of Drosophila yakuba (Fruit fly).